Consider the following 453-residue polypeptide: Ribosomal protein uS12 methylthiotransferase RimO (453 aa).

The 116-residue stretch at 5 to 120 (PKVGFVSLGC…VMQAVHSHLP (116 aa)) folds into the MTTase N-terminal domain. [4Fe-4S] cluster contacts are provided by Cys14, Cys50, Cys79, Cys151, Cys155, and Cys158. The 246-residue stretch at 137-382 (LTPRHYAYLK…MEVAEEVSAQ (246 aa)) folds into the Radical SAM core domain. Positions 385–453 (QRKVGKTLKV…ADGHDLWGEV (69 aa)) constitute a TRAM domain.

This sequence belongs to the methylthiotransferase family. RimO subfamily. Requires [4Fe-4S] cluster as cofactor.

It is found in the cytoplasm. The catalysed reaction is L-aspartate(89)-[ribosomal protein uS12]-hydrogen + (sulfur carrier)-SH + AH2 + 2 S-adenosyl-L-methionine = 3-methylsulfanyl-L-aspartate(89)-[ribosomal protein uS12]-hydrogen + (sulfur carrier)-H + 5'-deoxyadenosine + L-methionine + A + S-adenosyl-L-homocysteine + 2 H(+). Catalyzes the methylthiolation of an aspartic acid residue of ribosomal protein uS12. In Burkholderia ambifaria (strain ATCC BAA-244 / DSM 16087 / CCUG 44356 / LMG 19182 / AMMD) (Burkholderia cepacia (strain AMMD)), this protein is Ribosomal protein uS12 methylthiotransferase RimO.